Reading from the N-terminus, the 540-residue chain is Phosphatidylinositol 4-phosphate 5-kinase type-1 beta (540 aa).

Positions 1–23 are disordered; sequence MSSVTENGDVTAGKPNEEKTYKK. A PIPK domain is found at 25–395; that stretch reads TSSAIKGAIQ…RFLKFMNTRV (371 aa).

It localises to the cytoplasm. The protein resides in the cytosol. Its subcellular location is the cell membrane. It is found in the endomembrane system. The enzyme catalyses a 1,2-diacyl-sn-glycero-3-phospho-(1D-myo-inositol 4-phosphate) + ATP = a 1,2-diacyl-sn-glycero-3-phospho-(1D-myo-inositol-4,5-bisphosphate) + ADP + H(+). It catalyses the reaction 1-octadecanoyl-2-(5Z,8Z,11Z,14Z)-eicosatetraenoyl-sn-glycero-3-phospho-1D-myo-inositol 4-phosphate + ATP = 1-octadecanoyl-2-(5Z,8Z,11Z,14Z)-eicosatetraenoyl-sn-glycero-3-phospho-1D-myo-inositol 4,5-bisphosphate + ADP + H(+). The catalysed reaction is 1-octadecanoyl-2-(9Z)-octadecenoyl-sn-glycero-3-phospho-1D-myo-inositol 4-phosphate + ATP = 1-octadecanoyl-2-(9Z)-octadecenoyl-sn-glycero-3-phospho-1D-myo-inositol 4,5-bisphosphate + ADP + H(+). It carries out the reaction 1-octadecanoyl-2-(9Z)-octadecenoyl-sn-glycero-3-phospho-1D-myo-inositol + ATP = 1-octadecanoyl-2-(9Z)-octadecenoyl-sn-glycero-3-phospho-1D-myo-inositol 5-phosphate + ADP + H(+). The enzyme catalyses 1-octadecanoyl-2-(9Z,12Z)-octadecadienoyl-sn-glycero-3-phospho-1D-myo-inositol + ATP = 1-octadecanoyl-2-(9Z,12Z)-octadecadienoyl-sn-glycero-3-phospho-1D-myo-inositol 5-phosphate + ADP + H(+). It catalyses the reaction 1-octadecanoyl-2-(5Z,8Z,11Z,14Z-eicosatetraenoyl)-sn-glycero-3-phospho-(1D-myo-inositol) + ATP = 1-octadecanoyl-2-(5Z,8Z,11Z,14Z)-eicosatetraenoyl-sn-glycero-3-phospho-1D-myo-inositol 5-phosphate + ADP + H(+). The catalysed reaction is 1,2-di-(9Z,12Z)-octadecadienoyl-sn-glycero-3-phospho-1D-myo-inositol + ATP = 1,2-di(9Z,12Z)-octadecadienoyl-sn-glycero-3-phospho-1D-myo-inositol 5-phosphate + ADP + H(+). Its function is as follows. Catalyzes the phosphorylation of phosphatidylinositol 4-phosphate (PtdIns(4)P/PI4P) to form phosphatidylinositol 4,5-bisphosphate (PtdIns(4,5)P2/PIP2), a lipid second messenger that regulates several cellular processes such as signal transduction, vesicle trafficking, actin cytoskeleton dynamics, cell adhesion, and cell motility. PtdIns(4,5)P2 can directly act as a second messenger or can be utilized as a precursor to generate other second messengers: inositol 1,4,5-trisphosphate (IP3), diacylglycerol (DAG) or phosphatidylinositol-3,4,5-trisphosphate (PtdIns(3,4,5)P3/PIP3). The chain is Phosphatidylinositol 4-phosphate 5-kinase type-1 beta (PIP5K1B) from Gallus gallus (Chicken).